We begin with the raw amino-acid sequence, 1427 residues long: DNA-directed RNA polymerase subunit beta' (1427 aa).

The Zn(2+) site is built by Cys-66, Cys-68, Cys-81, and Cys-84. Mg(2+) contacts are provided by Asp-472, Asp-474, and Asp-476. Zn(2+) contacts are provided by Cys-815, Cys-889, Cys-896, and Cys-899.

This sequence belongs to the RNA polymerase beta' chain family. As to quaternary structure, the RNAP catalytic core consists of 2 alpha, 1 beta, 1 beta' and 1 omega subunit. When a sigma factor is associated with the core the holoenzyme is formed, which can initiate transcription. The cofactor is Mg(2+). It depends on Zn(2+) as a cofactor.

The enzyme catalyses RNA(n) + a ribonucleoside 5'-triphosphate = RNA(n+1) + diphosphate. In terms of biological role, DNA-dependent RNA polymerase catalyzes the transcription of DNA into RNA using the four ribonucleoside triphosphates as substrates. The polypeptide is DNA-directed RNA polymerase subunit beta' (Bacteroides thetaiotaomicron (strain ATCC 29148 / DSM 2079 / JCM 5827 / CCUG 10774 / NCTC 10582 / VPI-5482 / E50)).